The following is a 335-amino-acid chain: Ketol-acid reductoisomerase (NADP(+)) (335 aa).

One can recognise a KARI N-terminal Rossmann domain in the interval 2–182 (AKIIYDNETT…GATRAGVYET (181 aa)). Residues 25 to 28 (YGSQ), Arg-48, Ser-51, Ser-53, and 83 to 86 (DENQ) contribute to the NADP(+) site. His-108 is an active-site residue. Gly-134 lines the NADP(+) pocket. One can recognise a KARI C-terminal knotted domain in the interval 183–328 (TFREETETDL…KQIRANIPWL (146 aa)). The Mg(2+) site is built by Asp-191, Glu-195, Glu-227, and Glu-231. Ser-252 contributes to the substrate binding site.

This sequence belongs to the ketol-acid reductoisomerase family. It depends on Mg(2+) as a cofactor.

It catalyses the reaction (2R)-2,3-dihydroxy-3-methylbutanoate + NADP(+) = (2S)-2-acetolactate + NADPH + H(+). It carries out the reaction (2R,3R)-2,3-dihydroxy-3-methylpentanoate + NADP(+) = (S)-2-ethyl-2-hydroxy-3-oxobutanoate + NADPH + H(+). It functions in the pathway amino-acid biosynthesis; L-isoleucine biosynthesis; L-isoleucine from 2-oxobutanoate: step 2/4. Its pathway is amino-acid biosynthesis; L-valine biosynthesis; L-valine from pyruvate: step 2/4. Functionally, involved in the biosynthesis of branched-chain amino acids (BCAA). Catalyzes an alkyl-migration followed by a ketol-acid reduction of (S)-2-acetolactate (S2AL) to yield (R)-2,3-dihydroxy-isovalerate. In the isomerase reaction, S2AL is rearranged via a Mg-dependent methyl migration to produce 3-hydroxy-3-methyl-2-ketobutyrate (HMKB). In the reductase reaction, this 2-ketoacid undergoes a metal-dependent reduction by NADPH to yield (R)-2,3-dihydroxy-isovalerate. The chain is Ketol-acid reductoisomerase (NADP(+)) from Methanosarcina barkeri (strain Fusaro / DSM 804).